Reading from the N-terminus, the 453-residue chain is uncharacterized protein (453 aa).

2 disordered regions span residues G183–S210 and P428–K453. Basic residues predominate over residues T198–R207. The span at H433–K453 shows a compositional bias: polar residues.

This is an uncharacterized protein from Saccharomyces cerevisiae (strain ATCC 204508 / S288c) (Baker's yeast).